Here is a 927-residue protein sequence, read N- to C-terminus: Isoleucine--tRNA ligase (927 aa).

Positions 57-67 (PFANGNIHMGH) match the 'HIGH' region motif. L-isoleucyl-5'-AMP is bound at residue Glu553. The short motif at 594–598 (KMSKS) is the 'KMSKS' region element. Lys597 contacts ATP. Zn(2+) contacts are provided by Cys886, Cys889, Cys906, and Cys909.

The protein belongs to the class-I aminoacyl-tRNA synthetase family. IleS type 1 subfamily. As to quaternary structure, monomer. Requires Zn(2+) as cofactor.

It is found in the cytoplasm. It catalyses the reaction tRNA(Ile) + L-isoleucine + ATP = L-isoleucyl-tRNA(Ile) + AMP + diphosphate. Functionally, catalyzes the attachment of isoleucine to tRNA(Ile). As IleRS can inadvertently accommodate and process structurally similar amino acids such as valine, to avoid such errors it has two additional distinct tRNA(Ile)-dependent editing activities. One activity is designated as 'pretransfer' editing and involves the hydrolysis of activated Val-AMP. The other activity is designated 'posttransfer' editing and involves deacylation of mischarged Val-tRNA(Ile). The protein is Isoleucine--tRNA ligase of Lactobacillus helveticus (strain DPC 4571).